The primary structure comprises 376 residues: 1-deoxy-D-xylulose 5-phosphate reductoisomerase (376 aa).

NADPH is bound by residues serine 10, glycine 11, serine 12, valine 13, glycine 36, lysine 37, asparagine 38, and asparagine 118. Position 119 (lysine 119) interacts with 1-deoxy-D-xylulose 5-phosphate. An NADPH-binding site is contributed by glutamate 120. Aspartate 144 is a binding site for Mn(2+). 1-deoxy-D-xylulose 5-phosphate contacts are provided by serine 145, glutamate 146, serine 170, and histidine 193. Glutamate 146 is a Mn(2+) binding site. Residue glycine 199 participates in NADPH binding. Positions 206, 211, 212, and 215 each coordinate 1-deoxy-D-xylulose 5-phosphate. Glutamate 215 is a Mn(2+) binding site.

The protein belongs to the DXR family. Mg(2+) is required as a cofactor. Mn(2+) serves as cofactor.

The catalysed reaction is 2-C-methyl-D-erythritol 4-phosphate + NADP(+) = 1-deoxy-D-xylulose 5-phosphate + NADPH + H(+). Its pathway is isoprenoid biosynthesis; isopentenyl diphosphate biosynthesis via DXP pathway; isopentenyl diphosphate from 1-deoxy-D-xylulose 5-phosphate: step 1/6. Functionally, catalyzes the NADPH-dependent rearrangement and reduction of 1-deoxy-D-xylulose-5-phosphate (DXP) to 2-C-methyl-D-erythritol 4-phosphate (MEP). This Macrococcus caseolyticus (strain JCSC5402) (Macrococcoides caseolyticum) protein is 1-deoxy-D-xylulose 5-phosphate reductoisomerase.